Consider the following 488-residue polypeptide: MLETDSQRLRVVEDSLGKINVPLERYYGAQTARSLGNFNVCTRSDTMPLQIVYSLAMIKEVAACTNFKLGRISSKLSDAIVKACREVYHGQHDNEFPLVIWQTGSGTQTNMNVNEVLSSRASELIDGSRSSRLTVHPNDHVNLGQSSNDIFPTAMNLSIAMETAWKVLPSLNHLINVLKIKMHEFMNVIKIGRTHMQDAVPMSVGQELSGYVSQLQQAVDSIKSQLPLICHLAVGGTAVGTGLNCSKGFDEELCVSLTQLTDRLYRTMYKESTPVVDLIFKPAENKFAALAGHDALLQLSGCFNTTATALMRLSNDFCLLSSGPNCGLSEFVLPANEPGSSIMPGKVNPTQCESLRMVCLQIMGNHFTTSMAASQGQLELNVCKPLIAANLLHTCELLTDSTRCFADKCVRDLQLNREKIQEYVDKSLMLVTVLTPHIGYDLSAKLVQHASKFKKGLRESAIELNLLCGEKFDEIVKPMEMAFPHNNK.

Ser-105, Ser-147, Asn-148, Thr-194, and His-195 together coordinate (S)-malate. The Proton donor/acceptor role is filled by His-195. Ser-340 is an active-site residue. 3 residues coordinate (S)-malate: Ser-341, Lys-346, and Asn-348.

Belongs to the class-II fumarase/aspartase family. Fumarase subfamily. In terms of assembly, homotetramer.

The protein resides in the cytoplasm. It is found in the cytosol. The enzyme catalyses (S)-malate = fumarate + H2O. Catalyzes the reversible stereospecific interconversion of fumarate to L-malate. Fumarate metabolism in the cytosol plays a role during urea cycle and arginine metabolism; fumarate being a by-product of the urea cycle and amino-acid catabolism. The chain is Fumarate hydratase from Schistosoma mansoni (Blood fluke).